The primary structure comprises 172 residues: MNQDHPECDSEELTQNSPETDPLKVEVETLRGEIASIKADVLRERAELENQRKRLIRDVEQARKFANEKLLGELLPVFDSLDAGLTASGSEPSPLRDGLELTYKQLLKVATDNGLMLLDPVGQLFNPEHHQAISQTEVTDVEPGYVIQVFQKGYLLNERLLRPALVVVAKQD.

The tract at residues 1-23 (MNQDHPECDSEELTQNSPETDPL) is disordered.

Belongs to the GrpE family. Homodimer.

The protein localises to the cytoplasm. Participates actively in the response to hyperosmotic and heat shock by preventing the aggregation of stress-denatured proteins, in association with DnaK and GrpE. It is the nucleotide exchange factor for DnaK and may function as a thermosensor. Unfolded proteins bind initially to DnaJ; upon interaction with the DnaJ-bound protein, DnaK hydrolyzes its bound ATP, resulting in the formation of a stable complex. GrpE releases ADP from DnaK; ATP binding to DnaK triggers the release of the substrate protein, thus completing the reaction cycle. Several rounds of ATP-dependent interactions between DnaJ, DnaK and GrpE are required for fully efficient folding. The polypeptide is Protein GrpE (Xylella fastidiosa (strain 9a5c)).